The chain runs to 310 residues: GTPase Era (310 aa).

One can recognise an Era-type G domain in the interval 17 to 184 (RSGFVALIGA…MDYLAERLPE (168 aa)). The segment at 25 to 32 (GATNAGKS) is G1. Residue 25 to 32 (GATNAGKS) coordinates GTP. The segment at 51–55 (QTTRA) is G2. The interval 72–75 (DTPG) is G3. GTP is bound by residues 72 to 76 (DTPGI) and 134 to 137 (NKVD). Residues 134 to 137 (NKVD) are G4. The tract at residues 163–165 (ISA) is G5. The KH type-2 domain maps to 215–292 (LHQELPYASH…HLFLFVKVRE (78 aa)).

It belongs to the TRAFAC class TrmE-Era-EngA-EngB-Septin-like GTPase superfamily. Era GTPase family. In terms of assembly, monomer.

The protein localises to the cytoplasm. Its subcellular location is the cell inner membrane. Its function is as follows. An essential GTPase that binds both GDP and GTP, with rapid nucleotide exchange. Plays a role in 16S rRNA processing and 30S ribosomal subunit biogenesis and possibly also in cell cycle regulation and energy metabolism. In Sinorhizobium medicae (strain WSM419) (Ensifer medicae), this protein is GTPase Era.